The chain runs to 327 residues: Guanine nucleotide-binding protein subunit beta-like protein 1 (327 aa).

7 WD repeats span residues 16-54 (LRGTQSPVHALHFCEGAQAQGRPLLFSGSQSGLVHIWSL), 58-97 (RAVTTLDGHGGQCVTWLQTLPQGRQLLSQGRDLKLCLWDL), 103-145 (AVVD…ILEM), 153-195 (ALKP…LWDV), 200-237 (VCSRIACHEEPVMDLDFDSQKARGISGSAGKALAVWSL), 242-282 (ALQV…VFHW), and 286-323 (QPLAVLAFHSAAVQCVAFTADGLLAAGSKDQRISLWSL).

As to expression, ubiquitous. Highly expressed in heart, liver, skeletal muscle, kidney, spleen, thymus and pancreas. Detected at low levels in lung, placenta and brain.

The protein resides in the cytoplasm. It is found in the nucleus. Functionally, acts as a critical regulator of DNA damage response (DDR) signaling via specifically regulating phosphatidylinositol 3-kinase-related protein kinase (PIKK) family proteins. The polypeptide is Guanine nucleotide-binding protein subunit beta-like protein 1 (Homo sapiens (Human)).